Consider the following 117-residue polypeptide: Replication initiation control protein YabA (117 aa).

Positions 45–81 (NQHLRERLDQSDRDKSSETENDSAQKPGHSDIGEGHD) are disordered. Composition is skewed to basic and acidic residues over residues 46–62 (QHLR…KSSE) and 72–81 (GHSDIGEGHD). Histidine 92, cysteine 94, cysteine 107, and cysteine 110 together coordinate Zn(2+).

Belongs to the YabA family. As to quaternary structure, homotetramer. Interacts with both DnaA and DnaN, acting as a bridge between these two proteins. The cofactor is Zn(2+).

It is found in the cytoplasm. It localises to the nucleoid. In terms of biological role, involved in control of chromosome replication initiation. Inhibits the cooperative binding of DnaA to the oriC region, thus negatively regulating initiation of chromosome replication. Inhibits the ability of DnaA-ATP to form a helix on DNA; does not disassemble preformed DnaA-DNA helices. Decreases the residence time of DnaA on the chromosome at its binding sites (oriC, replication forks and promoter-binding sites). Tethers DnaA to the replication machinery via the DNA polymerase beta sliding clamp subunit (dnaN). Associates with oriC and other DnaA targets on the chromosome in a DnaA-dependent manner. The protein is Replication initiation control protein YabA of Bacillus pumilus (strain SAFR-032).